Consider the following 89-residue polypeptide: Small ribosomal subunit protein uS15 (89 aa).

Belongs to the universal ribosomal protein uS15 family. In terms of assembly, part of the 30S ribosomal subunit. Forms a bridge to the 50S subunit in the 70S ribosome, contacting the 23S rRNA.

Functionally, one of the primary rRNA binding proteins, it binds directly to 16S rRNA where it helps nucleate assembly of the platform of the 30S subunit by binding and bridging several RNA helices of the 16S rRNA. Its function is as follows. Forms an intersubunit bridge (bridge B4) with the 23S rRNA of the 50S subunit in the ribosome. The protein is Small ribosomal subunit protein uS15 of Pseudomonas savastanoi pv. phaseolicola (strain 1448A / Race 6) (Pseudomonas syringae pv. phaseolicola (strain 1448A / Race 6)).